A 307-amino-acid polypeptide reads, in one-letter code: MLQQRTIKTITRAVGVGLHSGQRVELTLRPAQPDTGIVFRRVDLPEPVDIPISAEAVTDTRMASTIGTGGAKVHTVEHLMSAIAGLGLDNIYIDITAEEVPILDGSSASFVFLLQSAGIELQKAPKRFIRVIRPVEVREGEGQNLKWARFDPYHGFKLRFEIDFAHPAVDSTGQCVEFDMGEDNYTRDIARARTFGFTKDVEMLRSHGLALGGGMDNAIVMDDYKVLNSDGLRYDDEFAKHKILDAIGDLYLIGRPLLAAYSAFRSGHGMNNQLLRALLAQPDAWELVSFDSERQAPKGFAQPARAW.

Positions 78, 241, and 245 each coordinate Zn(2+). H268 functions as the Proton donor in the catalytic mechanism.

This sequence belongs to the LpxC family. It depends on Zn(2+) as a cofactor.

It catalyses the reaction a UDP-3-O-[(3R)-3-hydroxyacyl]-N-acetyl-alpha-D-glucosamine + H2O = a UDP-3-O-[(3R)-3-hydroxyacyl]-alpha-D-glucosamine + acetate. The protein operates within glycolipid biosynthesis; lipid IV(A) biosynthesis; lipid IV(A) from (3R)-3-hydroxytetradecanoyl-[acyl-carrier-protein] and UDP-N-acetyl-alpha-D-glucosamine: step 2/6. Functionally, catalyzes the hydrolysis of UDP-3-O-myristoyl-N-acetylglucosamine to form UDP-3-O-myristoylglucosamine and acetate, the committed step in lipid A biosynthesis. The sequence is that of UDP-3-O-acyl-N-acetylglucosamine deacetylase from Delftia acidovorans (strain DSM 14801 / SPH-1).